A 196-amino-acid polypeptide reads, in one-letter code: Imidazole glycerol phosphate synthase subunit HisH (196 aa).

In terms of domain architecture, Glutamine amidotransferase type-1 spans 2–196 (KVAVIKYNAG…ERIIKNFLEL (195 aa)). Cysteine 77 (nucleophile) is an active-site residue. Residues histidine 178 and glutamate 180 contribute to the active site.

In terms of assembly, heterodimer of HisH and HisF.

Its subcellular location is the cytoplasm. The enzyme catalyses 5-[(5-phospho-1-deoxy-D-ribulos-1-ylimino)methylamino]-1-(5-phospho-beta-D-ribosyl)imidazole-4-carboxamide + L-glutamine = D-erythro-1-(imidazol-4-yl)glycerol 3-phosphate + 5-amino-1-(5-phospho-beta-D-ribosyl)imidazole-4-carboxamide + L-glutamate + H(+). The catalysed reaction is L-glutamine + H2O = L-glutamate + NH4(+). Its pathway is amino-acid biosynthesis; L-histidine biosynthesis; L-histidine from 5-phospho-alpha-D-ribose 1-diphosphate: step 5/9. Functionally, IGPS catalyzes the conversion of PRFAR and glutamine to IGP, AICAR and glutamate. The HisH subunit catalyzes the hydrolysis of glutamine to glutamate and ammonia as part of the synthesis of IGP and AICAR. The resulting ammonia molecule is channeled to the active site of HisF. The sequence is that of Imidazole glycerol phosphate synthase subunit HisH from Bacteroides fragilis (strain ATCC 25285 / DSM 2151 / CCUG 4856 / JCM 11019 / LMG 10263 / NCTC 9343 / Onslow / VPI 2553 / EN-2).